Reading from the N-terminus, the 342-residue chain is tRNA-specific 2-thiouridylase MnmA (342 aa).

Residues 6–13 (LLSGGVDS) and L32 each bind ATP. Residue C92 is the Nucleophile of the active site. Residues C92 and C191 are joined by a disulfide bond. An ATP-binding site is contributed by G116. The segment at 138-140 (KDQ) is interaction with tRNA. C191 (cysteine persulfide intermediate) is an active-site residue. Residues 293–294 (RY) are interaction with tRNA.

It belongs to the MnmA/TRMU family.

It is found in the cytoplasm. The enzyme catalyses S-sulfanyl-L-cysteinyl-[protein] + uridine(34) in tRNA + AH2 + ATP = 2-thiouridine(34) in tRNA + L-cysteinyl-[protein] + A + AMP + diphosphate + H(+). In terms of biological role, catalyzes the 2-thiolation of uridine at the wobble position (U34) of tRNA, leading to the formation of s(2)U34. This Helicobacter pylori (strain ATCC 700392 / 26695) (Campylobacter pylori) protein is tRNA-specific 2-thiouridylase MnmA.